We begin with the raw amino-acid sequence, 202 residues long: Translation initiation factor IF-3 (202 aa).

Positions 172-202 are disordered; the sequence is KTRASARHPEVPGAGSVQDIDATGDTDGSPH.

The protein belongs to the IF-3 family. Monomer.

The protein localises to the cytoplasm. Functionally, IF-3 binds to the 30S ribosomal subunit and shifts the equilibrium between 70S ribosomes and their 50S and 30S subunits in favor of the free subunits, thus enhancing the availability of 30S subunits on which protein synthesis initiation begins. In Mycobacterium leprae (strain TN), this protein is Translation initiation factor IF-3.